Here is a 63-residue protein sequence, read N- to C-terminus: Large ribosomal subunit protein uL30 (63 aa).

Belongs to the universal ribosomal protein uL30 family. In terms of assembly, part of the 50S ribosomal subunit.

The chain is Large ribosomal subunit protein uL30 from Coxiella burnetii (strain CbuK_Q154) (Coxiella burnetii (strain Q154)).